A 341-amino-acid chain; its full sequence is MNRKVLKVIDGETVFPPPIWMMRQAGRYLPEYRETRKKAGSFLDLCYSPDLAVEVTLQPIRRFGFDAAILFSDILVVPHALGRDLRFEEGKGPLMTPIDADEIFWLETEGVAKRLEPVYETVRLVREQLPDETTLLGFCGAPWTVATYMIAGHGTPDQAPARLFAYRFPEAFEKLLNDLADVSAEYLIEQLGAGADAVQIFDSWSGVLDEDCFERFCIRPVARIVQKVRAVYPQARIIGFPKGAGMLYAGYREKTGVDMLGLDWSVPLSFAALLQEEGAVQGNLDPLRVVAGGNALDEGVDAILERMGQGPLVFNLGHGITPQAPIENVQRMIDRVRGGKS.

Residues Arg-23–Arg-27, Asp-73, Tyr-148, Ser-203, and His-318 each bind substrate.

This sequence belongs to the uroporphyrinogen decarboxylase family. In terms of assembly, homodimer.

It localises to the cytoplasm. It carries out the reaction uroporphyrinogen III + 4 H(+) = coproporphyrinogen III + 4 CO2. It functions in the pathway porphyrin-containing compound metabolism; protoporphyrin-IX biosynthesis; coproporphyrinogen-III from 5-aminolevulinate: step 4/4. Its function is as follows. Catalyzes the decarboxylation of four acetate groups of uroporphyrinogen-III to yield coproporphyrinogen-III. The protein is Uroporphyrinogen decarboxylase of Brucella suis (strain ATCC 23445 / NCTC 10510).